The sequence spans 413 residues: 3-hydroxy-3-methylglutaryl-coenzyme A reductase (413 aa).

Active-site charge relay system residues include Glu-106 and Asp-312. The active-site Proton donor is the His-408.

This sequence belongs to the HMG-CoA reductase family.

It catalyses the reaction (R)-mevalonate + 2 NADP(+) + CoA = (3S)-3-hydroxy-3-methylglutaryl-CoA + 2 NADPH + 2 H(+). It functions in the pathway metabolic intermediate biosynthesis; (R)-mevalonate biosynthesis; (R)-mevalonate from acetyl-CoA: step 3/3. Functionally, converts HMG-CoA to mevalonate. The protein is 3-hydroxy-3-methylglutaryl-coenzyme A reductase (hmgA) of Pyrococcus horikoshii (strain ATCC 700860 / DSM 12428 / JCM 9974 / NBRC 100139 / OT-3).